The primary structure comprises 126 residues: Large ribosomal subunit protein bL19 (126 aa).

Belongs to the bacterial ribosomal protein bL19 family.

In terms of biological role, this protein is located at the 30S-50S ribosomal subunit interface and may play a role in the structure and function of the aminoacyl-tRNA binding site. This is Large ribosomal subunit protein bL19 from Dechloromonas aromatica (strain RCB).